A 342-amino-acid polypeptide reads, in one-letter code: Thymidylate synthase (342 aa).

Residues arginine 31 and 156–157 (RR) each bind dUMP. Cysteine 176 (nucleophile) is an active-site residue. DUMP-binding positions include 196-199 (RSGD), asparagine 207, and 237-239 (HVY). Residue aspartate 199 coordinates (6R)-5,10-methylene-5,6,7,8-tetrahydrofolate. Alanine 341 provides a ligand contact to (6R)-5,10-methylene-5,6,7,8-tetrahydrofolate.

Belongs to the thymidylate synthase family. Bacterial-type ThyA subfamily. In terms of assembly, homodimer.

It localises to the cytoplasm. It catalyses the reaction dUMP + (6R)-5,10-methylene-5,6,7,8-tetrahydrofolate = 7,8-dihydrofolate + dTMP. Its pathway is pyrimidine metabolism; dTTP biosynthesis. Functionally, catalyzes the reductive methylation of 2'-deoxyuridine-5'-monophosphate (dUMP) to 2'-deoxythymidine-5'-monophosphate (dTMP) while utilizing 5,10-methylenetetrahydrofolate (mTHF) as the methyl donor and reductant in the reaction, yielding dihydrofolate (DHF) as a by-product. This enzymatic reaction provides an intracellular de novo source of dTMP, an essential precursor for DNA biosynthesis. This is Thymidylate synthase from Haloferax volcanii (Halobacterium volcanii).